The sequence spans 454 residues: tRNA modification GTPase MnmE (454 aa).

R23, E80, and K120 together coordinate (6S)-5-formyl-5,6,7,8-tetrahydrofolate. One can recognise a TrmE-type G domain in the interval 216-377; it reads GMKVVIAGRP…LRNHLKQSMG (162 aa). Residue N226 participates in K(+) binding. Residues 226-231, 245-251, 270-273, 335-338, and 358-360 contribute to the GTP site; these read NAGKSS, TDIAGTT, DTAG, NKAD, and SAR. S230 contacts Mg(2+). The K(+) site is built by T245, I247, and T250. Mg(2+) is bound at residue T251. K454 is a binding site for (6S)-5-formyl-5,6,7,8-tetrahydrofolate.

This sequence belongs to the TRAFAC class TrmE-Era-EngA-EngB-Septin-like GTPase superfamily. TrmE GTPase family. As to quaternary structure, homodimer. Heterotetramer of two MnmE and two MnmG subunits. K(+) is required as a cofactor.

It localises to the cytoplasm. Exhibits a very high intrinsic GTPase hydrolysis rate. Involved in the addition of a carboxymethylaminomethyl (cmnm) group at the wobble position (U34) of certain tRNAs, forming tRNA-cmnm(5)s(2)U34. The chain is tRNA modification GTPase MnmE from Salmonella typhi.